The following is a 417-amino-acid chain: Zinc finger CCCH domain-containing protein ZFN-like (417 aa).

2 consecutive C3H1-type zinc fingers follow at residues 31-58 (PGEP…HPPN) and 75-103 (RLGQ…HPKD). A C3H1-type 3; degenerate zinc finger spans residues 121–149 (RPNESERAYYLRTGQCKFGNTCKFHHPQP). 2 C3H1-type zinc fingers span residues 278–306 (RPDQ…HPRE) and 324–352 (RPGE…HPMG). Residues 383 to 417 (SSEGLVESGTAKPRRLSLSETRPIPPGDDNIDDEG) form a disordered region.

It localises to the nucleus. This is Zinc finger CCCH domain-containing protein ZFN-like from Pisum sativum (Garden pea).